Consider the following 301-residue polypeptide: Zinc finger protein 346 (301 aa).

2 Matrin-type zinc fingers span residues 55–85 (SQCK…KVRR) and 117–141 (KACS…GKVH). Positions 57, 60, 73, 79, 119, 122, 135, and 141 each coordinate Zn(2+). A disordered region spans residues 151 to 177 (GSQTPALPQPEAQAKKDDGMQGPAEQD). 2 consecutive Matrin-type zinc fingers follow at residues 180–210 (RFCS…HMNK) and 230–257 (YPCT…HKNH). The interval 250-283 (SGSKHKNHAKPKKGPNAFAPPPDNYQPDYQYPTN) is disordered. Residues 251–262 (GSKHKNHAKPKK) are compositionally biased toward basic residues.

It localises to the nucleus. The protein localises to the cytoplasm. In terms of biological role, binds preferentially to dsRNA, but also to RNA-DNA hybrids. The chain is Zinc finger protein 346 from Danio rerio (Zebrafish).